Here is a 514-residue protein sequence, read N- to C-terminus: 2,3-bisphosphoglycerate-independent phosphoglycerate mutase (514 aa).

Mn(2+) contacts are provided by D13 and S63. Catalysis depends on S63, which acts as the Phosphoserine intermediate. Residues H124, 154–155 (RD), R186, R192, 258–261 (RADR), and K332 each bind substrate. Mn(2+) contacts are provided by D399, H403, D440, H441, and H459.

It belongs to the BPG-independent phosphoglycerate mutase family. In terms of assembly, monomer. It depends on Mn(2+) as a cofactor.

The enzyme catalyses (2R)-2-phosphoglycerate = (2R)-3-phosphoglycerate. It participates in carbohydrate degradation; glycolysis; pyruvate from D-glyceraldehyde 3-phosphate: step 3/5. In terms of biological role, catalyzes the interconversion of 2-phosphoglycerate and 3-phosphoglycerate. The protein is 2,3-bisphosphoglycerate-independent phosphoglycerate mutase of Legionella pneumophila (strain Lens).